The following is a 207-amino-acid chain: 5-amino-6-(5-phosphoribosylamino)uracil reductase (207 aa).

Residue Ser-6 participates in substrate binding. Trp-8 serves as a coordination point for NADP(+). Arg-22 lines the substrate pocket. Asp-38 is a binding site for NADP(+). Residues Leu-42 and Arg-45 each contribute to the substrate site. Ser-72 lines the NADP(+) pocket. Glu-137 serves as a coordination point for substrate.

Belongs to the HTP reductase family.

The catalysed reaction is 5-amino-6-(5-phospho-D-ribitylamino)uracil + NADP(+) = 5-amino-6-(5-phospho-D-ribosylamino)uracil + NADPH + H(+). It functions in the pathway cofactor biosynthesis; riboflavin biosynthesis; 5-amino-6-(D-ribitylamino)uracil from GTP: step 3/4. The protein is 5-amino-6-(5-phosphoribosylamino)uracil reductase (ribD2) of Buchnera aphidicola subsp. Acyrthosiphon pisum (strain APS) (Acyrthosiphon pisum symbiotic bacterium).